The primary structure comprises 91 residues: Mercuric transport protein periplasmic component (91 aa).

The N-terminal stretch at Met-1–Ala-19 is a signal peptide. Residues Gln-22 to Ser-88 form the HMA domain. The Hg(2+) site is built by Cys-33 and Cys-36.

This sequence belongs to the MerP family. Monomer.

The protein localises to the periplasm. Its function is as follows. Involved in mercury resistance. Acts as a mercury scavenger that specifically binds to a mercuric ion in the periplasm and probably passes it to the cytoplasmic mercuric reductase MerA via the mercuric transport protein MerT. In Acinetobacter calcoaceticus, this protein is Mercuric transport protein periplasmic component.